Here is a 133-residue protein sequence, read N- to C-terminus: Holo-[acyl-carrier-protein] synthase (133 aa).

The Mg(2+) site is built by D8 and E56.

Belongs to the P-Pant transferase superfamily. AcpS family. It depends on Mg(2+) as a cofactor.

It is found in the cytoplasm. The catalysed reaction is apo-[ACP] + CoA = holo-[ACP] + adenosine 3',5'-bisphosphate + H(+). Functionally, transfers the 4'-phosphopantetheine moiety from coenzyme A to a Ser of acyl-carrier-protein. The chain is Holo-[acyl-carrier-protein] synthase from Deinococcus radiodurans (strain ATCC 13939 / DSM 20539 / JCM 16871 / CCUG 27074 / LMG 4051 / NBRC 15346 / NCIMB 9279 / VKM B-1422 / R1).